We begin with the raw amino-acid sequence, 702 residues long: Elongation factor G 2 (702 aa).

The tr-type G domain maps to 8-291; the sequence is ELYRNIGIVA…AVIDYLPAPS (284 aa). Residues 17–24, 89–93, and 143–146 each bind GTP; these read AHVDAGKT, DTPGH, and NKMD. The tract at residues 293–314 is disordered; sequence IPAIRGTDPDDEEKHDERHADD.

This sequence belongs to the TRAFAC class translation factor GTPase superfamily. Classic translation factor GTPase family. EF-G/EF-2 subfamily.

It is found in the cytoplasm. Catalyzes the GTP-dependent ribosomal translocation step during translation elongation. During this step, the ribosome changes from the pre-translocational (PRE) to the post-translocational (POST) state as the newly formed A-site-bound peptidyl-tRNA and P-site-bound deacylated tRNA move to the P and E sites, respectively. Catalyzes the coordinated movement of the two tRNA molecules, the mRNA and conformational changes in the ribosome. This Pseudomonas aeruginosa (strain ATCC 15692 / DSM 22644 / CIP 104116 / JCM 14847 / LMG 12228 / 1C / PRS 101 / PAO1) protein is Elongation factor G 2 (fusB).